A 140-amino-acid chain; its full sequence is Organic hydroperoxide resistance protein-like (140 aa).

This sequence belongs to the OsmC/Ohr family.

This Staphylococcus aureus (strain MRSA252) protein is Organic hydroperoxide resistance protein-like.